Reading from the N-terminus, the 590-residue chain is Membrane protein insertase YidC (590 aa).

A run of 5 helical transmembrane segments spans residues 5–25 (SVIGFALIAAIMIVWLQFMKP), 368–388 (GLIIIIFAFLIKLVTWPLSLA), 433–453 (LGGCLPTVIQMPLLFAMFYVF), 483–503 (LPLYGDHIAIMPILMAVTVFF), and 519–539 (IMMWLFPAMMLFFFNNMPAGL).

Belongs to the OXA1/ALB3/YidC family. Type 1 subfamily. In terms of assembly, interacts with the Sec translocase complex via SecD. Specifically interacts with transmembrane segments of nascent integral membrane proteins during membrane integration.

It localises to the cell inner membrane. Functionally, required for the insertion and/or proper folding and/or complex formation of integral membrane proteins into the membrane. Involved in integration of membrane proteins that insert both dependently and independently of the Sec translocase complex, as well as at least some lipoproteins. Aids folding of multispanning membrane proteins. The chain is Membrane protein insertase YidC from Chlorobaculum tepidum (strain ATCC 49652 / DSM 12025 / NBRC 103806 / TLS) (Chlorobium tepidum).